We begin with the raw amino-acid sequence, 645 residues long: Cyclic nucleotide-gated channel rod photoreceptor subunit alpha (645 aa).

Topologically, residues 1 to 121 (MKVGVIETHH…PAGNMYYNWL (121 aa)) are cytoplasmic. Positions 53–100 (NNNSNKDEEKKKKKEKKSKSENKKDGERQKNKEKKEKHKNKDKKKGKE) are disordered. The span at 70–86 (SKSENKKDGERQKNKEK) shows a compositional bias: basic and acidic residues. Over residues 87–96 (KEKHKNKDKK) the composition is skewed to basic residues. The helical transmembrane segment at 122-143 (FCITMPVMYNWTMIIARACFDE) threads the bilayer. The Extracellular segment spans residues 144–153 (LQNDYLAVWF). Residues 154–174 (IVDYVSDVIYIADMFVRTRTG) form a helical membrane-spanning segment. Residues 175 to 199 (YLEQGLLVKEEQKLKEKYKSSLQFK) lie on the Cytoplasmic side of the membrane. The chain crosses the membrane as a helical span at residues 200 to 218 (LDFLSIIPTDLLYFKLGLN). At 219-223 (YPELR) the chain is on the extracellular side. A helical transmembrane segment spans residues 224–242 (INRLLRVARMFEFFQRTET). The Cytoplasmic portion of the chain corresponds to 243–249 (RTNYPNI). A helical transmembrane segment spans residues 250-273 (FRISNLVMYIVIIIHWNACVYYSI). The Extracellular segment spans residues 274–296 (SKAIGFGADTWVYPNTSHPEFAR). The next 2 helical transmembrane spans lie at 297–331 (LTRK…FFVV) and 332–356 (VDFL…SNMN). The Cytoplasmic portion of the chain corresponds to 357–645 (AARAEFQAKI…TDKPGVTKTE (289 aa)). Residues 439-561 (LLVE…DGLL), E498, and R513 each bind 3',5'-cyclic GMP.

This sequence belongs to the cyclic nucleotide-gated cation channel (TC 1.A.1.5) family.

The protein localises to the membrane. Visual signal transduction is mediated by a G-protein coupled cascade using cGMP as second messenger. This protein can be activated by cGMP which leads to an opening of the cation channel and thereby causing a depolarization of rod photoreceptors. This chain is Cyclic nucleotide-gated channel rod photoreceptor subunit alpha, found in Gallus gallus (Chicken).